The chain runs to 551 residues: Ubiquitin carboxyl-terminal hydrolase 24 (551 aa).

2 disordered regions span residues 51-104 (NSSV…SLRV) and 163-188 (NEDF…TESV). The region spanning 197–551 (RGLINAGNLC…QAYVLFYKQV (355 aa)) is the USP domain. The active-site Nucleophile is C206. Positions 329-338 (SKSSVISSAN) are enriched in polar residues. The tract at residues 329 to 349 (SKSSVISSANDDGDEWETVGP) is disordered. The active-site Proton acceptor is H510.

The protein belongs to the peptidase C19 family.

It carries out the reaction Thiol-dependent hydrolysis of ester, thioester, amide, peptide and isopeptide bonds formed by the C-terminal Gly of ubiquitin (a 76-residue protein attached to proteins as an intracellular targeting signal).. Its function is as follows. Recognizes and hydrolyzes the peptide bond at the C-terminal Gly of ubiquitin. Involved in the processing of poly-ubiquitin precursors as well as that of ubiquitinated proteins. The protein is Ubiquitin carboxyl-terminal hydrolase 24 (UBP24) of Arabidopsis thaliana (Mouse-ear cress).